Reading from the N-terminus, the 1856-residue chain is Golgi-specific brefeldin A-resistance guanine nucleotide exchange factor 1 (1856 aa).

Residues methionine 1 to methionine 211 are DCB (dimerization and cyclophiln-binding); DCB:DCB domain and DCB:HUS domain interaction. Positions methionine 1–proline 378 are interaction with RAB1B. 2 disordered regions span residues lysine 215–threonine 256 and aspartate 291–valine 370. A compositionally biased stretch (basic residues) spans tryptophan 227 to threonine 241. The segment covering arginine 316–isoleucine 328 has biased composition (polar residues). Phosphoserine occurs at positions 349 and 352. Threonine 505 carries the post-translational modification Phosphothreonine. Residues arginine 528–asparagine 548 are HUS (homology upstream of Sec7); DCB:HUS domain interaction. The segment at glutamine 601–alanine 626 is disordered. A compositionally biased stretch (polar residues) spans aspartate 615–arginine 625. An SEC7 domain is found at glutamate 690–glutamate 880. The segment at methionine 884–valine 1370 is phosphatidylinositol-phosphate binding; required for translocation to the leading edge and for ARF1 activation upon GPCR signaling. Residues threonine 1284–alanine 1294 are compositionally biased toward low complexity. The interval threonine 1284–serine 1333 is disordered. The span at glutamine 1295–valine 1308 shows a compositional bias: polar residues. The residue at position 1296 (serine 1296) is a Phosphoserine. A Phosphotyrosine modification is found at tyrosine 1314. Serine 1316, serine 1318, and serine 1333 each carry phosphoserine. Phosphothreonine; by AMPK is present on threonine 1335. Disordered stretches follow at residues cysteine 1430–proline 1484, threonine 1739–isoleucine 1806, and proline 1837–asparagine 1856. Positions serine 1432–glycine 1446 are enriched in basic and acidic residues. Serine 1475 and serine 1781 each carry phosphoserine. Low complexity predominate over residues serine 1775–serine 1793.

Can form homodimers and probably homotetramers. Interacts with COPG1; the interaction is independent on ARF1 activation. Interacts with ARF1, ARF3, ARF4 and ARF5. Interacts with RAB1B (GTP-bound form); required for GBF1 membrane association. Interacts with GGA1, GGA2 and GGA3. Interacts with USO1. Interacts (via SEC7 domain) with PNPLA2 (via C-terminus); the interaction is direct. Can form homodimers and probably homotetramers. Interacts with COPG1; the interaction is independent on ARF1 activation. Interacts with ARF1, ARF3, ARF4 and ARF5. Interacts with RAB1B (GTP-bound form); required for GBF1 membrane association. Interacts with GGA1, GGA2 and GGA3. Interacts with USO1. Interacts (via SEC7 domain) with PNPLA2 (via C-terminus); the interaction is direct. Interacts with ARMH3.

The protein resides in the golgi apparatus. It localises to the cis-Golgi network. The protein localises to the endoplasmic reticulum-Golgi intermediate compartment. Its subcellular location is the trans-Golgi network. It is found in the cytoplasm. The protein resides in the lipid droplet. It localises to the membrane. With respect to regulation, inhibited by brefeldin A (BFA). Inhibited by golgicide A (GCA). Functionally, guanine-nucleotide exchange factor (GEF) for members of the Arf family of small GTPases involved in trafficking in the early secretory pathway; its GEF activity initiates the coating of nascent vesicles via the localized generation of activated ARFs through replacement of GDP with GTP. Recruitment to cis-Golgi membranes requires membrane association of Arf-GDP and can be regulated by ARF1, ARF3, ARF4 and ARF5. Involved in the recruitment of the COPI coat complex to cellular membranes such as the endoplasmic reticulum exit sites (ERES), and the endoplasmic reticulum-Golgi intermediate (ERGIC) and cis-Golgi compartments implicating ARF1 activation. Involved in COPI vesicle-dependent retrograde transport from the ERGIC and cis-Golgi compartments to the endoplasmic reticulum (ER). Involved in the trans-Golgi network recruitment of GGA1, GGA2, GGA3, BIG1, BIG2, and the AP-1 adaptor protein complex related to chlathrin-dependent transport; the function requires its GEF activity (probably at least in part on ARF4 and ARF5). Has GEF activity towards ARF1. Has in vitro GEF activity towards ARF5. Involved in the processing of PSAP. Required for the assembly of the Golgi apparatus. The AMPK-phosphorylated form is involved in Golgi disassembly during mitotis and under stress conditions. May be involved in the COPI vesicle-dependent recruitment of PNPLA2 to lipid droplets. In neutrophils, involved in G protein-coupled receptor (GPCR)-mediated chemotaxis und superoxide production. Proposed to be recruited by phosphatidylinositol-phosphates generated upon GPCR stimulation to the leading edge where it recruits and activates ARF1, and is involved in recruitment of GIT2 and the NADPH oxidase complex. Plays a role in maintaining mitochondrial morphology. The sequence is that of Golgi-specific brefeldin A-resistance guanine nucleotide exchange factor 1 (GBF1) from Cricetulus griseus (Chinese hamster).